Consider the following 294-residue polypeptide: S-methyl-5'-thioadenosine phosphorylase (294 aa).

Residues serine 16, 58–59 (RH), and 91–92 (SA) contribute to the phosphate site. Methionine 189 lines the substrate pocket. Threonine 190 serves as a coordination point for phosphate. A substrate-binding site is contributed by 213 to 215 (DFD).

This sequence belongs to the PNP/MTAP phosphorylase family. MTAP subfamily. As to quaternary structure, homohexamer. Dimer of a homotrimer.

The enzyme catalyses S-methyl-5'-thioadenosine + phosphate = 5-(methylsulfanyl)-alpha-D-ribose 1-phosphate + adenine. The catalysed reaction is 5'-deoxyadenosine + phosphate = 5-deoxy-alpha-D-ribose 1-phosphate + adenine. The protein operates within amino-acid biosynthesis; L-methionine biosynthesis via salvage pathway; S-methyl-5-thio-alpha-D-ribose 1-phosphate from S-methyl-5'-thioadenosine (phosphorylase route): step 1/1. Its function is as follows. Catalyzes the reversible phosphorylation of S-methyl-5'-thioadenosine (MTA) to adenine and 5-methylthioribose-1-phosphate. Involved in the breakdown of MTA, a major by-product of polyamine biosynthesis. Responsible for the first step in the methionine salvage pathway after MTA has been generated from S-adenosylmethionine. Has broad substrate specificity with 6-aminopurine nucleosides as preferred substrates. Also catalyzes the phosphorylation of 5'-deoxyadenosine (5'dAdo) to 5-deoxyribose 1-phosphate. Part of a bifunctional DHAP-shunt salvage pathway for SAM by-products. The polypeptide is S-methyl-5'-thioadenosine phosphorylase (Rhodospirillum rubrum (strain ATCC 11170 / ATH 1.1.1 / DSM 467 / LMG 4362 / NCIMB 8255 / S1)).